A 292-amino-acid chain; its full sequence is 1D-myo-inositol 2-acetamido-2-deoxy-alpha-D-glucopyranoside deacetylase (292 aa).

Residues histidine 11, aspartate 14, and histidine 146 each contribute to the Zn(2+) site.

Belongs to the MshB deacetylase family. Requires Zn(2+) as cofactor.

It carries out the reaction 1D-myo-inositol 2-acetamido-2-deoxy-alpha-D-glucopyranoside + H2O = 1D-myo-inositol 2-amino-2-deoxy-alpha-D-glucopyranoside + acetate. Catalyzes the deacetylation of 1D-myo-inositol 2-acetamido-2-deoxy-alpha-D-glucopyranoside (GlcNAc-Ins) in the mycothiol biosynthesis pathway. This is 1D-myo-inositol 2-acetamido-2-deoxy-alpha-D-glucopyranoside deacetylase from Acidothermus cellulolyticus (strain ATCC 43068 / DSM 8971 / 11B).